Here is a 425-residue protein sequence, read N- to C-terminus: MSRVKKLHQWKERLRDRARTVSFGRFLWRRFLDDRLFQAAASLAYTTVFALVPLAIVVFGVLSAFPAFNEWKDALTDFIFTNFVPGAARSVQNYLNRSLEDLGKFTVAGMVALVASLLITLHSIEQTFNSIWRVAAARPKVTRFLIYWTVLTLGTMLAAASMAMAAYVFALPLFRTTEGQWLAEFAWRLAPMAVEFICIVLIYRVVPQHVVRLRHALPGALLAVILMEIVKWGFGVYLGNFQTYQRIYGALSALPILLLWIYLSWVSVLLGASLASSMAAFRYQPEAMRLPTGFEIYGLLRLLGRFRQARIHGEGLDEDRILALEPMLTDTLMQELLCELKRMRLLRRDERGQWLLARDLDLVPLAELYENCQLRVPIEDRPLPCRDDAYGQAAAAALEQLRQPLRSVLAQPVGDLYTHLPGDPP.

6 helical membrane-spanning segments follow: residues 48–68, 105–125, 154–174, 182–202, 219–239, and 250–270; these read VFAL…FPAF, FTVA…HSIE, GTML…LPLF, LAEF…IVLI, GALL…VYLG, and ALSA…SVLL.

This sequence belongs to the UPF0761 family.

The protein localises to the cell inner membrane. This Xanthomonas oryzae pv. oryzae (strain PXO99A) protein is UPF0761 membrane protein PXO_04555.